We begin with the raw amino-acid sequence, 260 residues long: Protein-L-isoaspartate O-methyltransferase (260 aa).

The tract at residues 1–27 is disordered; that stretch reads MKSPVAGAVLDPSTPPPTTGTSWRWPG. The active site involves Ser-92.

This sequence belongs to the methyltransferase superfamily. L-isoaspartyl/D-aspartyl protein methyltransferase family.

The protein resides in the cytoplasm. It carries out the reaction [protein]-L-isoaspartate + S-adenosyl-L-methionine = [protein]-L-isoaspartate alpha-methyl ester + S-adenosyl-L-homocysteine. In terms of biological role, catalyzes the methyl esterification of L-isoaspartyl residues in peptides and proteins that result from spontaneous decomposition of normal L-aspartyl and L-asparaginyl residues. It plays a role in the repair and/or degradation of damaged proteins. In Aeropyrum pernix (strain ATCC 700893 / DSM 11879 / JCM 9820 / NBRC 100138 / K1), this protein is Protein-L-isoaspartate O-methyltransferase (pcm).